The primary structure comprises 284 residues: D-tagatose-1,6-bisphosphate aldolase subunit GatY (284 aa).

Asp82 functions as the Proton donor in the catalytic mechanism. Zn(2+) contacts are provided by His83 and His180. Residue Gly181 coordinates dihydroxyacetone phosphate. Position 208 (His208) interacts with Zn(2+). Dihydroxyacetone phosphate-binding positions include 209–211 (GAS) and 230–233 (NVAT).

It belongs to the class II fructose-bisphosphate aldolase family. TagBP aldolase GatY subfamily. As to quaternary structure, forms a complex with GatZ. The cofactor is Zn(2+).

The catalysed reaction is D-tagatofuranose 1,6-bisphosphate = D-glyceraldehyde 3-phosphate + dihydroxyacetone phosphate. The protein operates within carbohydrate metabolism; D-tagatose 6-phosphate degradation; D-glyceraldehyde 3-phosphate and glycerone phosphate from D-tagatose 6-phosphate: step 2/2. Catalytic subunit of the tagatose-1,6-bisphosphate aldolase GatYZ, which catalyzes the reversible aldol condensation of dihydroxyacetone phosphate (DHAP or glycerone-phosphate) with glyceraldehyde 3-phosphate (G3P) to produce tagatose 1,6-bisphosphate (TBP). Requires GatZ subunit for full activity and stability. Is involved in the catabolism of galactitol. This Escherichia coli (strain K12 / MC4100 / BW2952) protein is D-tagatose-1,6-bisphosphate aldolase subunit GatY.